The primary structure comprises 272 residues: Small ribosomal subunit protein uS2 (272 aa).

The disordered stretch occupies residues 244 to 272 (EDDYEGAEGDLDLDSANEEESLEDNNEEE).

This sequence belongs to the universal ribosomal protein uS2 family.

The chain is Small ribosomal subunit protein uS2 from Trichodesmium erythraeum (strain IMS101).